Here is a 165-residue protein sequence, read N- to C-terminus: 3-isopropylmalate dehydratase small subunit (165 aa).

Belongs to the LeuD family. LeuD type 2 subfamily. Heterodimer of LeuC and LeuD.

The catalysed reaction is (2R,3S)-3-isopropylmalate = (2S)-2-isopropylmalate. The protein operates within amino-acid biosynthesis; L-leucine biosynthesis; L-leucine from 3-methyl-2-oxobutanoate: step 2/4. Functionally, catalyzes the isomerization between 2-isopropylmalate and 3-isopropylmalate, via the formation of 2-isopropylmaleate. This is 3-isopropylmalate dehydratase small subunit from Hydrogenobaculum sp. (strain Y04AAS1).